A 429-amino-acid polypeptide reads, in one-letter code: MAHALKRILYATWYPDILVNYTHSVNCRRTLDVMSETNNEFLAALESAADQIKVGDVVTGELLAIDNDNQAVVGLSTGEEGVVPAREYSDDRNINLADELKIGDTIEAVVISNVTSDKEGVAYLLSKKRLDARKAWENLSFAEGDTVDAKVINAVRGGLIVDVNGVRGFVPASMVAERFVSDLNQFKNKDIKAQVIEIDPANARLILSRKAVAAQELAAQLAEVFSKLSVGEVVEGTVARLTDFGAFVDLGGVDGLVHVSEISHDRVKNPADVLTKGDKVDVKILALDTEKGRISLSIKATQRGPWDEAADQIAAGSVLEGTVKRVKDFGAFVEILPGIEGLVHVSQISNKRIENPSEVLKSGDKVQVKVLDIKPAEERISLSMKALEEKPEREDRRGNDGSASRADIAAYKQQDDSAATLGDIFGDKL.

S1 motif domains follow at residues 55-128 (GDVV…LSKK), 144-211 (GDTV…SRKA), 231-299 (GEVV…LSIK), and 316-385 (GSVL…LSMK). Positions 382–399 (LSMKALEEKPEREDRRGN) are enriched in basic and acidic residues. The tract at residues 382-412 (LSMKALEEKPEREDRRGNDGSASRADIAAYK) is disordered.

This sequence belongs to the bacterial ribosomal protein bS1 family.

Binds mRNA; thus facilitating recognition of the initiation point. It is needed to translate mRNA with a short Shine-Dalgarno (SD) purine-rich sequence. The sequence is that of Small ribosomal subunit protein bS1 (rps1) from Leuconostoc lactis.